The chain runs to 501 residues: Dipeptide and tripeptide permease A (501 aa).

Over 1–21 (MSTANNKPAESVSLNAFKQPR) the chain is Cytoplasmic. Residues 22-44 (AFYLIFSIELWERFGYYGLQGIM) form a helical membrane-spanning segment. At 45–59 (AVYLVKQLGMSEADS) the chain is on the periplasmic side. The helical transmembrane segment at 60–80 (ITLFSSFSALVYGLVAIGGWL) threads the bilayer. Topologically, residues 81-89 (GDKVLGTKR) are cytoplasmic. Residues 90-110 (VIMLGAIVLAIGYALVAWSGH) traverse the membrane as a helical segment. A topological domain (periplasmic) is located at residue Asp111. Residues 112–132 (AAIVYMGMATIAVGNGLFKAN) form a helical membrane-spanning segment. Residues 133–153 (PSSLLSTCYDKNDPRLDGAFT) lie on the Cytoplasmic side of the membrane. A helical transmembrane segment spans residues 154–174 (MYYMSINIGSFFSMLATPWLA). The Periplasmic segment spans residues 175-178 (ARFG). A helical membrane pass occupies residues 179–199 (WSVAFALSVVGMVITIINFAF). Residues 200 to 218 (CQKWVKQYGSKPDFAPVHM) are Cytoplasmic-facing. Residues 219–239 (GKLLATIAGVVVLVAIATWLL) form a helical membrane-spanning segment. Residues 240–246 (HNQGIAR) lie on the Periplasmic side of the membrane. Residues 247 to 267 (MVLGVVALGIVVIFAKETIGL) traverse the membrane as a helical segment. Topologically, residues 268 to 274 (KGAARRK) are cytoplasmic. Residues 275–295 (MIVAFLLMVEAIVFFVLYSQM) traverse the membrane as a helical segment. Topologically, residues 296-320 (PTSLNFFAIRNVEHSILGIAFEPEQ) are periplasmic. The helical transmembrane segment at 321–341 (YQALNPFWIMIGSPILAAIYN) threads the bilayer. The Cytoplasmic portion of the chain corresponds to 342-352 (KMGDRLPMPHK). A helical transmembrane segment spans residues 353-373 (FAIGMVLCSGAFLVLPLGAKF). The Periplasmic portion of the chain corresponds to 374–383 (ASDAGIVSVN). Residues 384 to 404 (WLILSYALQSIGELMISGLGL) traverse the membrane as a helical segment. At 405-414 (AMVAQLVPQR) the chain is on the cytoplasmic side. The chain crosses the membrane as a helical span at residues 415 to 435 (LMGFIMGSWFLTTAGAAIIAG). The Periplasmic segment spans residues 436-459 (KIANLMAVPENVTDPLVSLEVYGH). The chain crosses the membrane as a helical span at residues 460–480 (VFLQIGIVTAVIAALMLLTAP). The Cytoplasmic portion of the chain corresponds to 481-501 (KLNRMTQDDSADLKARETAAA).

Belongs to the major facilitator superfamily. Proton-dependent oligopeptide transporter (POT/PTR) (TC 2.A.17) family. DtpA subfamily.

The protein resides in the cell inner membrane. Functionally, proton-dependent permease that transports di- and tripeptides. The chain is Dipeptide and tripeptide permease A from Klebsiella pneumoniae (strain 342).